A 62-amino-acid polypeptide reads, in one-letter code: Insect toxin BsIT4 (62 aa).

The LCN-type CS-alpha/beta domain maps to 1–62 (DGYIKGNKGC…WLYAATNTCG (62 aa)). 4 cysteine pairs are disulfide-bonded: C10-C61, C14-C35, C21-C42, and C25-C44.

The protein belongs to the long (4 C-C) scorpion toxin superfamily. Sodium channel inhibitor family. Beta subfamily. In terms of tissue distribution, expressed by the venom gland.

Its subcellular location is the secreted. In terms of biological role, depressant insect beta-toxins cause a transient contraction paralysis followed by a slow flaccid paralysis. They bind voltage-independently at site-4 of sodium channels (Nav) and shift the voltage of activation toward more negative potentials thereby affecting sodium channel activation and promoting spontaneous and repetitive firing. This toxin is active only on insects. The protein is Insect toxin BsIT4 of Hottentotta tamulus sindicus (Scorpion).